Here is a 139-residue protein sequence, read N- to C-terminus: Small ribosomal subunit protein bS16 (139 aa).

The interval 84–139 (KGEPAPAPLLQPAEKAARPSFEAIGGEDEGKGEAITQKKKADKRDEAAAESSASEA) is disordered.

Belongs to the bacterial ribosomal protein bS16 family.

This is Small ribosomal subunit protein bS16 from Streptomyces lividans.